The primary structure comprises 284 residues: Acetyl-coenzyme A carboxylase carboxyl transferase subunit beta (284 aa).

One can recognise a CoA carboxyltransferase N-terminal domain in the interval 25–284 (LWVKCPETGA…LCKILTKSVQ (260 aa)).

It belongs to the AccD/PCCB family. As to quaternary structure, acetyl-CoA carboxylase is a heterohexamer composed of biotin carboxyl carrier protein (AccB), biotin carboxylase (AccC) and two subunits each of ACCase subunit alpha (AccA) and ACCase subunit beta (AccD).

It is found in the cytoplasm. It carries out the reaction N(6)-carboxybiotinyl-L-lysyl-[protein] + acetyl-CoA = N(6)-biotinyl-L-lysyl-[protein] + malonyl-CoA. It functions in the pathway lipid metabolism; malonyl-CoA biosynthesis; malonyl-CoA from acetyl-CoA: step 1/1. Functionally, component of the acetyl coenzyme A carboxylase (ACC) complex. Biotin carboxylase (BC) catalyzes the carboxylation of biotin on its carrier protein (BCCP) and then the CO(2) group is transferred by the transcarboxylase to acetyl-CoA to form malonyl-CoA. This Liberibacter asiaticus (strain psy62) protein is Acetyl-coenzyme A carboxylase carboxyl transferase subunit beta.